A 377-amino-acid chain; its full sequence is MSNGIVIIGSGFAARQLVKNIRKQDASIPLTLIAADSMDEYNKPDLSHVISQGQRADDLTRQTAGEFAEQFNLRLFPHTWVTDIDAEAHVVKSQNNQWQYDKLVLATGASAFVPPVPGRELILTLNSQQEYRACETQLRDARRVLIVGGGLIGSELAMDFCRAGKAVTLIDNAASILASLMPPEVSSRLQHRLTEMGVHLLLKSQLQGLEKTDSGILATLDRQRCIEVDAVIAATGLRPETALARRAGLTINRGVCVDSYLQTSNADIYALGDCAEINGQVLPFLQPIQLSAMVLAKNLLGNNTPLKLPAMLVKIKTPELPLHLAGETQRQDLRWHIYTERQGMVARGVDDADQLRAFVVSEDRMKEAFGLLKTLSM.

It belongs to the FAD-dependent oxidoreductase family. The cofactor is FAD.

It localises to the cytoplasm. The catalysed reaction is 2 reduced [nitric oxide reductase rubredoxin domain] + NAD(+) + H(+) = 2 oxidized [nitric oxide reductase rubredoxin domain] + NADH. The protein operates within nitrogen metabolism; nitric oxide reduction. Functionally, one of at least two accessory proteins for anaerobic nitric oxide (NO) reductase. Reduces the rubredoxin moiety of NO reductase. The polypeptide is Nitric oxide reductase FlRd-NAD(+) reductase (Escherichia coli O6:K15:H31 (strain 536 / UPEC)).